A 750-amino-acid polypeptide reads, in one-letter code: Catalase A (750 aa).

The segment at 30-49 is disordered; sequence ERDTADAHTQQPLTTDHGVR. Catalysis depends on residues H93 and N166. Position 380 (Y380) interacts with heme.

This sequence belongs to the catalase family. It depends on heme as a cofactor.

Its subcellular location is the peroxisome matrix. It catalyses the reaction 2 H2O2 = O2 + 2 H2O. Catalyzes the degradation of hydrogen peroxide (H(2)O(2)) generated by peroxisomal oxidases to water and oxygen, thereby protecting cells from the toxic effects of hydrogen peroxide. In Aspergillus fumigatus (strain ATCC MYA-4609 / CBS 101355 / FGSC A1100 / Af293) (Neosartorya fumigata), this protein is Catalase A (catA).